The following is a 271-amino-acid chain: CAAX prenyl protease 2 (271 aa).

Over 1 to 9 (MISSYKYNP) the chain is Extracellular. A helical transmembrane segment spans residues 10–30 (KLYFLSTFVVTYILWFTGAYL). Residues 31-38 (SFSSTYSG) are Cytoplasmic-facing. The chain crosses the membrane as a helical span at residues 39-59 (IYMLIMLPGLMAPFIISTILI). The Extracellular segment spans residues 60–82 (AKSKNNELKKDFINRLFNLKLIN). Residues 83–105 (LKTIPVVFLLMPAVILLSILLSI) form a helical membrane-spanning segment. Over 106-125 (PFGGSISQFQFSGGFSFSTD) the chain is Cytoplasmic. A helical membrane pass occupies residues 126-149 (FVPVLFLLLLAATFEELGWRGYAF). The active-site Proton donor/acceptor is E140. The Extracellular segment spans residues 150 to 159 (DSLQSRYSLF). A helical membrane pass occupies residues 160–179 (KASILFGIFWSLWHFPLIFV). The Proton donor/acceptor role is filled by H173. Residues 180–192 (NNSYQYEIFNQSI) lie on the Cytoplasmic side of the membrane. The helical transmembrane segment at 193–213 (WYGLNFFLSILPMGIIITWMC) threads the bilayer. The Extracellular segment spans residues 214-219 (LKNRKS). The helical transmembrane segment at 220 to 237 (IILAIIFHFLINLNQELL) threads the bilayer. Residues 238–243 (AITQDT) lie on the Cytoplasmic side of the membrane. Residues 244 to 263 (KIIETGVLFLVAAAIILYDK) traverse the membrane as a helical segment. The Extracellular portion of the chain corresponds to 264–271 (KMFFEKLG).

It belongs to the peptidase U48 family.

Its subcellular location is the cell membrane. It carries out the reaction Hydrolyzes the peptide bond -P2-(S-farnesyl or geranylgeranyl)C-P1'-P2'-P3'-COOH where P1' and P2' are amino acids with aliphatic sidechains and P3' is any C-terminal residue.. Activity is unaffected by metalloprotease inhibitors 5 mM EDTA and 5 mM Zn(2+). Activity partially inhibited by 1,10-phenanthroline and 1,7-phenanthroline. In terms of biological role, protease involved in the processing of a variety of prenylated proteins containing the C-terminal CAAX motif, where C is a cysteine modified with an isoprenoid lipid, A is an aliphatic amino acid and X is any C-terminal amino acid. Proteolytically removes the C-terminal three residues of farnesylated proteins, leaving the prenylated cysteine as the new C-terminus. Hydrolysis depends on a farnesylated cysteine residue and no activity is shown towards geranylgeranylated peptides. The chain is CAAX prenyl protease 2 from Methanococcus maripaludis (strain DSM 14266 / JCM 13030 / NBRC 101832 / S2 / LL).